Consider the following 137-residue polypeptide: Large ribosomal subunit protein uL16 (137 aa).

It belongs to the universal ribosomal protein uL16 family. Part of the 50S ribosomal subunit.

In terms of biological role, binds 23S rRNA and is also seen to make contacts with the A and possibly P site tRNAs. This Methylorubrum extorquens (strain CM4 / NCIMB 13688) (Methylobacterium extorquens) protein is Large ribosomal subunit protein uL16.